The chain runs to 139 residues: MKKNTLLNSELSYVIATLGHTDEITICDAGLPIPDASQRIDLALIQGIPTFIDTVKATLTEMQIEGVIVAEEFKTVSPQMHDELMTLIAAEEAQCSKSITVSYIPHEEFKIHTRESKAIVRTGECTPYANVIFQSGVVF.

The Proton donor role is filled by H20. Residues D28, H106, and 128–130 (YAN) contribute to the substrate site.

Belongs to the RbsD / FucU family. RbsD subfamily. As to quaternary structure, homodecamer.

It localises to the cytoplasm. It carries out the reaction beta-D-ribopyranose = beta-D-ribofuranose. It participates in carbohydrate metabolism; D-ribose degradation; D-ribose 5-phosphate from beta-D-ribopyranose: step 1/2. Its function is as follows. Catalyzes the interconversion of beta-pyran and beta-furan forms of D-ribose. This chain is D-ribose pyranase, found in Aliivibrio fischeri (strain ATCC 700601 / ES114) (Vibrio fischeri).